A 238-amino-acid polypeptide reads, in one-letter code: RNA-binding protein pno1 (238 aa).

Residues 162 to 211 form the KH domain; sequence QSRAIGRLAGKGGRTKFTIENVTKTRIVLADSKIHILGSYQNIQLARRAI.

Belongs to the PNO1 family.

Its subcellular location is the nucleus. The protein localises to the nucleolus. This Drosophila pseudoobscura pseudoobscura (Fruit fly) protein is RNA-binding protein pno1 (l(1)G0004).